The chain runs to 270 residues: Bark lectin (270 aa).

Positions I1–S15 are cleaved as a signal peptide. 3 N-linked (GlcNAc...) asparagine glycosylation sites follow: N60, N76, and N127. Residues E141 and D143 each coordinate Mn(2+). Ca(2+) is bound by residues D143, H145, N147, and D150. Mn(2+)-binding residues include D150 and H155. N201 is a glycosylation site (N-linked (GlcNAc...) asparagine).

The protein belongs to the leguminous lectin family.

Functionally, galNAc-specific lectin. In Styphnolobium japonicum (Japanese pagoda tree), this protein is Bark lectin.